The sequence spans 89 residues: Elongation factor 1-beta (89 aa).

This sequence belongs to the EF-1-beta/EF-1-delta family.

Promotes the exchange of GDP for GTP in EF-1-alpha/GDP, thus allowing the regeneration of EF-1-alpha/GTP that could then be used to form the ternary complex EF-1-alpha/GTP/AAtRNA. The polypeptide is Elongation factor 1-beta (Methanococcus vannielii (strain ATCC 35089 / DSM 1224 / JCM 13029 / OCM 148 / SB)).